The following is a 367-amino-acid chain: 2-oxoisovalerate dehydrogenase subunit alpha (367 aa).

Residues Phe-66, Tyr-95, 128–131, and Ser-144 contribute to the substrate site; that span reads MPEH. Residue 94-96 coordinates thiamine diphosphate; sequence YYR. Thiamine diphosphate-binding positions include 144-146, 174-180, 204-208, and His-273; these read SPI, GDGATSE, and NFYAI. Residues Asp-175, Asn-204, and Tyr-206 each coordinate Mg(2+).

The protein belongs to the BCKDHA family. In terms of assembly, heterotetramer of two alpha and two beta chains. Directly associated with ODBB in the E1 complex. The cofactor is thiamine diphosphate.

The catalysed reaction is N(6)-[(R)-lipoyl]-L-lysyl-[protein] + 3-methyl-2-oxobutanoate + H(+) = N(6)-[(R)-S(8)-2-methylpropanoyldihydrolipoyl]-L-lysyl-[protein] + CO2. In terms of biological role, the branched-chain alpha-keto dehydrogenase complex catalyzes the overall conversion of alpha-keto acids to acyl-CoA and CO(2). It contains multiple copies of three enzymatic components: branched-chain alpha-keto acid decarboxylase (E1), lipoamide acyltransferase (E2) and lipoamide dehydrogenase (E3). The chain is 2-oxoisovalerate dehydrogenase subunit alpha from Thermus thermophilus (strain ATCC 27634 / DSM 579 / HB8).